We begin with the raw amino-acid sequence, 292 residues long: MKGTIIKGIGGFYYIKIDNSEEIIECKARGKFRHTELTPMIGDYVEISIDKNNKGAIEKIYERRSELFRPAVANVTQALVVFSFKNPDINIDLLNKFLLLCEYNNLKVIVCFNKMDLVNKEDYKDIISMIEQAGYDIIFLNAKEERNMDIIKKLIKDNVTVFCGPSGVGKSTMLNKIIGKETMITGNISEKLKRGKHTTRHSELIYVDEGLLVDTPGFSSLDINFMEKEDLLYCIPEFRDFIGECKFTGCLHHREPNCAVKKAVEEGHIHKNRYDFYIKTLEEIMNRRKKKW.

Residues 64-221 (RSELFRPAVA…LVDTPGFSSL (158 aa)) form the CP-type G domain. Residues 113–116 (NKMD) and 164–172 (GPSGVGKST) contribute to the GTP site. The Zn(2+) site is built by C245, C250, H252, and C258.

It belongs to the TRAFAC class YlqF/YawG GTPase family. RsgA subfamily. In terms of assembly, monomer. Associates with 30S ribosomal subunit, binds 16S rRNA. Zn(2+) serves as cofactor.

Its subcellular location is the cytoplasm. Functionally, one of several proteins that assist in the late maturation steps of the functional core of the 30S ribosomal subunit. Helps release RbfA from mature subunits. May play a role in the assembly of ribosomal proteins into the subunit. Circularly permuted GTPase that catalyzes slow GTP hydrolysis, GTPase activity is stimulated by the 30S ribosomal subunit. The sequence is that of Small ribosomal subunit biogenesis GTPase RsgA from Clostridium botulinum (strain 657 / Type Ba4).